Reading from the N-terminus, the 198-residue chain is Glycerol-3-phosphate acyltransferase (198 aa).

Helical transmembrane passes span 5 to 25, 56 to 76, 84 to 104, 114 to 134, and 158 to 178; these read LILL…LWIG, SIVT…PFFF, FWLL…FAGF, AGVI…VFLV, and LFMG…FVIW.

Belongs to the PlsY family. In terms of assembly, probably interacts with PlsX.

The protein localises to the cell membrane. The catalysed reaction is an acyl phosphate + sn-glycerol 3-phosphate = a 1-acyl-sn-glycero-3-phosphate + phosphate. The protein operates within lipid metabolism; phospholipid metabolism. Its function is as follows. Catalyzes the transfer of an acyl group from acyl-phosphate (acyl-PO(4)) to glycerol-3-phosphate (G3P) to form lysophosphatidic acid (LPA). This enzyme utilizes acyl-phosphate as fatty acyl donor, but not acyl-CoA or acyl-ACP. The sequence is that of Glycerol-3-phosphate acyltransferase from Listeria monocytogenes serotype 4b (strain CLIP80459).